We begin with the raw amino-acid sequence, 334 residues long: Protein-methionine-sulfoxide reductase catalytic subunit MsrP (334 aa).

A signal peptide (tat-type signal) is located at residues 1 to 44 (MKKNQFLKESDVTAESVFFMKRRQVLKALGISAAAFSLPHAAHA). Residues N88, 91–92 (YE), C146, T181, N233, R238, and 249–251 (GIK) contribute to the Mo-molybdopterin site.

It belongs to the MsrP family. Heterodimer of a catalytic subunit (MsrP) and a heme-binding subunit (MsrQ). Requires Mo-molybdopterin as cofactor. In terms of processing, predicted to be exported by the Tat system. The position of the signal peptide cleavage has not been experimentally proven.

It is found in the periplasm. The enzyme catalyses L-methionyl-[protein] + a quinone + H2O = L-methionyl-(S)-S-oxide-[protein] + a quinol. It carries out the reaction L-methionyl-[protein] + a quinone + H2O = L-methionyl-(R)-S-oxide-[protein] + a quinol. Its function is as follows. Part of the MsrPQ system that repairs oxidized periplasmic proteins containing methionine sulfoxide residues (Met-O), using respiratory chain electrons. Thus protects these proteins from oxidative-stress damage caused by reactive species of oxygen and chlorine generated by the host defense mechanisms. MsrPQ is essential for the maintenance of envelope integrity under bleach stress, rescuing a wide series of structurally unrelated periplasmic proteins from methionine oxidation, including the primary periplasmic chaperone SurA and the lipoprotein Pal. The catalytic subunit MsrP is non-stereospecific, being able to reduce both (R-) and (S-) diastereoisomers of methionine sulfoxide. The sequence is that of Protein-methionine-sulfoxide reductase catalytic subunit MsrP from Escherichia coli O6:H1 (strain CFT073 / ATCC 700928 / UPEC).